The primary structure comprises 234 residues: Cell adhesion molecule CEACAM15 (234 aa).

A signal peptide spans 1–32 (MGAETMESPSLFLCKGLLLTASLLICWNWSTA). 4 N-linked (GlcNAc...) asparagine glycosylation sites follow: Asn28, Asn75, Asn151, and Asn184. An Ig-like C2-type domain is found at 146 to 226 (PYLQLNHTRL…NSFSSKKSYP (81 aa)). A disulfide bond links Cys165 and Cys213.

Belongs to the immunoglobulin superfamily. CEA family. As to expression, detected in placenta.

This is Cell adhesion molecule CEACAM15 from Mus musculus (Mouse).